The following is a 488-amino-acid chain: Ribulose bisphosphate carboxylase large chain (488 aa).

2 residues coordinate substrate: N127 and T177. The active-site Proton acceptor is the K179. K181 is a substrate binding site. Mg(2+) contacts are provided by K205, D207, and E208. At K205 the chain carries N6-carboxylysine. The Proton acceptor role is filled by H297. The substrate site is built by R298, H330, and S382.

The protein belongs to the RuBisCO large chain family. Type I subfamily. As to quaternary structure, heterohexadecamer of 8 large chains and 8 small chains. Requires Mg(2+) as cofactor.

It localises to the plastid. The protein localises to the chloroplast. It carries out the reaction 2 (2R)-3-phosphoglycerate + 2 H(+) = D-ribulose 1,5-bisphosphate + CO2 + H2O. It catalyses the reaction D-ribulose 1,5-bisphosphate + O2 = 2-phosphoglycolate + (2R)-3-phosphoglycerate + 2 H(+). In terms of biological role, ruBisCO catalyzes two reactions: the carboxylation of D-ribulose 1,5-bisphosphate, the primary event in carbon dioxide fixation, as well as the oxidative fragmentation of the pentose substrate in the photorespiration process. Both reactions occur simultaneously and in competition at the same active site. The protein is Ribulose bisphosphate carboxylase large chain of Gracilaria tenuistipitata var. liui (Red alga).